A 37-amino-acid polypeptide reads, in one-letter code: Large ribosomal subunit protein bL36 (37 aa).

Belongs to the bacterial ribosomal protein bL36 family.

In Maridesulfovibrio salexigens (strain ATCC 14822 / DSM 2638 / NCIMB 8403 / VKM B-1763) (Desulfovibrio salexigens), this protein is Large ribosomal subunit protein bL36.